We begin with the raw amino-acid sequence, 261 residues long: Imidazole glycerol phosphate synthase subunit HisF (261 aa).

Residues Asp16 and Asp135 contribute to the active site.

This sequence belongs to the HisA/HisF family. In terms of assembly, heterodimer of HisH and HisF.

It localises to the cytoplasm. The catalysed reaction is 5-[(5-phospho-1-deoxy-D-ribulos-1-ylimino)methylamino]-1-(5-phospho-beta-D-ribosyl)imidazole-4-carboxamide + L-glutamine = D-erythro-1-(imidazol-4-yl)glycerol 3-phosphate + 5-amino-1-(5-phospho-beta-D-ribosyl)imidazole-4-carboxamide + L-glutamate + H(+). It participates in amino-acid biosynthesis; L-histidine biosynthesis; L-histidine from 5-phospho-alpha-D-ribose 1-diphosphate: step 5/9. Its function is as follows. IGPS catalyzes the conversion of PRFAR and glutamine to IGP, AICAR and glutamate. The HisF subunit catalyzes the cyclization activity that produces IGP and AICAR from PRFAR using the ammonia provided by the HisH subunit. This chain is Imidazole glycerol phosphate synthase subunit HisF, found in Mycobacterium ulcerans (strain Agy99).